The sequence spans 437 residues: GTPase Era, mitochondrial (437 aa).

The N-terminal 20 residues, 1 to 20 (MAAPRRYFPGIVRALLGAWQ), are a transit peptide targeting the mitochondrion. An Era-type G domain is found at 112–330 (RVLRVVLLGA…QYLLTQAQPG (219 aa)). Residues 120–127 (GAPNAGKS) are G1. 120-127 (GAPNAGKS) is a binding site for GTP. Residues 146 to 150 (HTTRC) form a G2 region. Residues 167–170 (DTPG) are G3. 167-171 (DTPGI) contributes to the GTP binding site. Position 173 is a phosphoserine (S173). A GTP-binding site is contributed by 236–239 (NKVD). The segment at 236–239 (NKVD) is G4. Residues 272-293 (SRPSTHCPGPETEDPNTHAVRS) form a disordered region. The G5 stretch occupies residues 308 to 310 (LSA). A KH type-2 domain is found at 360–437 (LPEEVPYSVQ…LLRLSVKLLK (78 aa)).

This sequence belongs to the TRAFAC class TrmE-Era-EngA-EngB-Septin-like GTPase superfamily. Era GTPase family.

Its subcellular location is the mitochondrion matrix. The protein resides in the mitochondrion inner membrane. Functionally, probable GTPase that plays a role in the mitochondrial ribosomal small subunit assembly. Specifically binds the 12S mitochondrial rRNA (12S mt-rRNA) to a 33 nucleotide section delineating the 3' terminal stem-loop region. May act as a chaperone that protects the 12S mt-rRNA on the 28S mitoribosomal subunit during ribosomal small subunit assembly. This Rattus norvegicus (Rat) protein is GTPase Era, mitochondrial (Eral1).